Here is a 511-residue protein sequence, read N- to C-terminus: ATP synthase subunit beta, mitochondrial (511 aa).

Residues 1–33 constitute a mitochondrion transit peptide; sequence MVLPRLYTATSRAAFKAAKQSAPLLSTSWKRCM. Thr-112 is modified (phosphothreonine). An ATP-binding site is contributed by 190 to 197; the sequence is GGAGVGKT. Thr-237 is modified (phosphothreonine). The residue at position 373 (Ser-373) is a Phosphoserine.

This sequence belongs to the ATPase alpha/beta chains family. As to quaternary structure, F-type ATPases have 2 components, CF(1) - the catalytic core - and CF(0) - the membrane proton channel. CF(1) has five subunits: alpha(3), beta(3), gamma(1), delta(1), epsilon(1). CF(0) has three main subunits: a, b and c.

Its subcellular location is the mitochondrion. The protein resides in the mitochondrion inner membrane. The enzyme catalyses ATP + H2O + 4 H(+)(in) = ADP + phosphate + 5 H(+)(out). In terms of biological role, mitochondrial membrane ATP synthase (F(1)F(0) ATP synthase or Complex V) produces ATP from ADP in the presence of a proton gradient across the membrane which is generated by electron transport complexes of the respiratory chain. F-type ATPases consist of two structural domains, F(1) - containing the extramembraneous catalytic core, and F(0) - containing the membrane proton channel, linked together by a central stalk and a peripheral stalk. During catalysis, ATP synthesis in the catalytic domain of F(1) is coupled via a rotary mechanism of the central stalk subunits to proton translocation. Subunits alpha and beta form the catalytic core in F(1). Rotation of the central stalk against the surrounding alpha(3)beta(3) subunits leads to hydrolysis of ATP in three separate catalytic sites on the beta subunits. The chain is ATP synthase subunit beta, mitochondrial (ATP2) from Saccharomyces cerevisiae (strain ATCC 204508 / S288c) (Baker's yeast).